A 102-amino-acid polypeptide reads, in one-letter code: uncharacterized protein (102 aa).

A run of 3 helical transmembrane segments spans residues 14 to 34 (IKNW…VISA), 35 to 55 (VAFT…LILI), and 76 to 96 (ILSI…HCYI).

The protein localises to the cell membrane. This is an uncharacterized protein from Methanocaldococcus jannaschii (strain ATCC 43067 / DSM 2661 / JAL-1 / JCM 10045 / NBRC 100440) (Methanococcus jannaschii).